Reading from the N-terminus, the 61-residue chain is Metallothionein-II, hippocampal (61 aa).

At Met-1 the chain carries N-acetylmethionine. The segment at 1 to 29 is beta; the sequence is MDPNCSCATGGSCTCANSCTCKACKCASC. Residues Cys-5, Cys-7, Cys-13, Cys-15, Cys-19, Cys-21, Cys-24, Cys-26, Cys-29, Cys-33, Cys-34, Cys-36, Cys-37, Cys-41, Cys-44, Cys-48, Cys-50, Cys-57, Cys-59, and Cys-60 each contribute to the a divalent metal cation site. The alpha stretch occupies residues 30–61; it reads KKSCCSCCPVGCAKCAQGCICKGASDKCSCCA.

The protein belongs to the metallothionein superfamily. Type 1 family.

Its function is as follows. Metallothioneins have a high content of cysteine residues that bind various heavy metals; these proteins are transcriptionally regulated by both heavy metals and glucocorticoids. This isoform may play a role in regulating the transport, accumulation, and compartmentation of zinc in the hippocampus. The sequence is that of Metallothionein-II, hippocampal from Bos taurus (Bovine).